The following is a 342-amino-acid chain: Polyprenyl transferase trt2 (342 aa).

The next 9 helical transmembrane spans lie at 71 to 91, 95 to 115, 141 to 161, 163 to 183, 187 to 207, 216 to 236, 261 to 278, 282 to 304, and 319 to 339; these read VVGV…TVLL, IILS…NDLI, AALL…LLPS, CTVE…GKRF, PQLI…SLEV, TLSM…VYAC, LAYG…LGGV, LGLP…FLSV, and AKSS…LEYL.

This sequence belongs to the UbiA prenyltransferase family. Requires Mg(2+) as cofactor.

It is found in the membrane. The enzyme catalyses 3,5-dimethylorsellinate + (2E,6E)-farnesyl diphosphate = (3R)-3-farnesyl-6-hydroxy-2,3,5-trimethyl-4-oxocyclohexa-1,5-diene-1-carboxylate + diphosphate + H(+). It functions in the pathway secondary metabolite biosynthesis; terpenoid biosynthesis. Its function is as follows. Polyprenyl transferase; part of the gene cluster that mediates the biosynthesis of terretonin, a fungal meroterpenoid that acts as a mycotoxin. The first step of the pathway is the synthesis of 3,5-dimethylorsellinic acid (DMOA) by the polyketide synthase trt4. DMOA is then prenylated into farnesyl-DMOA by the polyprenyl transferase trt2. Methylation by the methyltransferase trt5 then leads to farnesyl-DMOA methyl ester which is further subject to epoxidation by the FAD-dependent monooxygenase trt8 to yield epoxyfarnesyl-DMOA methyl ester. Cyclization of epoxyfarnesyl-DMOA methyl ester by the terpene cyclase trt1 leads to a tetracycle intermediate which is in turn converted to preterretonin. Dehydrogenase trt9 comes next to transform preterretonin to preterrenoid. The FAD-dependent monooxygenase trt3 is then required for the C-hydroxylation at C16 of preterrenoid to yield terrenoid. The cytochrome P450 trt6 catalyzes three successive oxidations to transform terrenoid into an unstable intermediate, which then undergoes the D-ring expansion and unusual rearrangement of the methoxy group to afford the core skeleton of terretonin. Trt14 catalyzes the D-ring expansion of terretonin involving intramolecular methoxy rearrangement as well as the hydrolysis of the expanded D-ring and the methyl ester moiety. Finally, the nonheme iron-dependent dioxygenase trt7 accomplishes the last two oxidation reactions steps to complete the biosynthesis of terretonin. Terretonin C is produced via spontaneous decarboxylation of the terretonin precursor. Another shunt product of the terretonin biosynthesis is dihydrofarnesyl-DMOA, derived from epoxyfarnesyl-DMOA through hydrolysis of the epoxide. This Aspergillus terreus (strain NIH 2624 / FGSC A1156) protein is Polyprenyl transferase trt2.